A 293-amino-acid polypeptide reads, in one-letter code: uncharacterized protein (293 aa).

Residue D119 is part of the active site.

Belongs to the pseudouridine synthase RluA family.

It carries out the reaction a uridine in RNA = a pseudouridine in RNA. This is an uncharacterized protein from Helicobacter pylori (strain J99 / ATCC 700824) (Campylobacter pylori J99).